A 390-amino-acid polypeptide reads, in one-letter code: Transforming growth factor beta-1 proprotein (390 aa).

A signal peptide spans 1–29 (MPPSGLRLLPLLLPLLWLLVLTPGRPAAG). The straightjacket domain stretch occupies residues 30–74 (LSTCKTIDMELVKRKRIEAIRGQILSKLRLASPPSQGDVPPGPLP). The interval 75 to 271 (EAVLALYNST…ATPLERAQHL (197 aa)) is arm domain. Residues N82, N136, and N176 are each glycosylated (N-linked (GlcNAc...) asparagine). Residues 226–252 (DSKDNTLHVEINGFNSGRRGDLATIHG) are bowtie tail. The Cell attachment site motif lies at 244–246 (RGD). Cystine bridges form between C285–C294, C293–C356, C322–C387, and C326–C389.

It belongs to the TGF-beta family. As to quaternary structure, homodimer; disulfide-linked. Interacts with the serine proteases, HTRA1 and HTRA3: the interaction with either inhibits TGFB1-mediated signaling and the HTRA protease activity is required for this inhibition. May interact with THSD4; this interaction may lead to sequestration by FBN1 microfibril assembly and attenuation of TGFB signaling. Interacts with CD109, DPT and ASPN. Interacts with EFEMP2. Interacts with TSKU; the interaction contributes to regulation of the hair cycle. Interacts with TGFBR3. In terms of assembly, homodimer; disulfide-linked. Interacts with transforming growth factor beta-1 (TGF-beta-1) chain; interaction is non-covalent and maintains TGF-beta-1 in a latent state; each latency-associated peptide (LAP) monomer interacts with TGF-beta-1 in the other monomer. Interacts with LTBP1; leading to regulation of TGF-beta-1 activation. Interacts with LRRC32/GARP; leading to regulation of TGF-beta-1 activation on the surface of activated regulatory T-cells (Tregs). Interacts with LRRC33/NRROS; leading to regulation of TGF-beta-1 activation in macrophages and microglia. Interacts (via cell attachment site) with integrins ITGAV and ITGB6 (ITGAV:ITGB6), leading to release of the active TGF-beta-1. Interacts with NREP; the interaction results in a decrease in TGFB1 autoinduction. Interacts with HSP90AB1; inhibits latent TGFB1 activation. Homodimer; disulfide-linked. Interacts with TGF-beta receptors (TGFBR1 and TGFBR2), leading to signal transduction. In terms of processing, transforming growth factor beta-1 proprotein: The precursor proprotein is cleaved in the Golgi apparatus by FURIN to form Transforming growth factor beta-1 (TGF-beta-1) and Latency-associated peptide (LAP) chains, which remain non-covalently linked, rendering TGF-beta-1 inactive. N-glycosylated. Deglycosylation leads to activation of Transforming growth factor beta-1 (TGF-beta-1); mechanisms triggering deglycosylation-driven activation of TGF-beta-1 are however unclear.

The protein resides in the secreted. It localises to the extracellular space. Its subcellular location is the extracellular matrix. In terms of biological role, transforming growth factor beta-1 proprotein: Precursor of the Latency-associated peptide (LAP) and Transforming growth factor beta-1 (TGF-beta-1) chains, which constitute the regulatory and active subunit of TGF-beta-1, respectively. Required to maintain the Transforming growth factor beta-1 (TGF-beta-1) chain in a latent state during storage in extracellular matrix. Associates non-covalently with TGF-beta-1 and regulates its activation via interaction with 'milieu molecules', such as LTBP1, LRRC32/GARP and LRRC33/NRROS, that control activation of TGF-beta-1. Interaction with LRRC33/NRROS regulates activation of TGF-beta-1 in macrophages and microglia. Interaction with LRRC32/GARP controls activation of TGF-beta-1 on the surface of activated regulatory T-cells (Tregs). Interaction with integrins (ITGAV:ITGB6 or ITGAV:ITGB8) results in distortion of the Latency-associated peptide chain and subsequent release of the active TGF-beta-1. Functionally, multifunctional protein that regulates the growth and differentiation of various cell types and is involved in various processes, such as normal development, immune function, microglia function and responses to neurodegeneration. Activation into mature form follows different steps: following cleavage of the proprotein in the Golgi apparatus, Latency-associated peptide (LAP) and Transforming growth factor beta-1 (TGF-beta-1) chains remain non-covalently linked rendering TGF-beta-1 inactive during storage in extracellular matrix. At the same time, LAP chain interacts with 'milieu molecules', such as LTBP1, LRRC32/GARP and LRRC33/NRROS that control activation of TGF-beta-1 and maintain it in a latent state during storage in extracellular milieus. TGF-beta-1 is released from LAP by integrins (ITGAV:ITGB6 or ITGAV:ITGB8): integrin-binding to LAP stabilizes an alternative conformation of the LAP bowtie tail and results in distortion of the LAP chain and subsequent release of the active TGF-beta-1. Once activated following release of LAP, TGF-beta-1 acts by binding to TGF-beta receptors (TGFBR1 and TGFBR2), which transduce signal. While expressed by many cells types, TGF-beta-1 only has a very localized range of action within cell environment thanks to fine regulation of its activation by Latency-associated peptide chain (LAP) and 'milieu molecules'. Plays an important role in bone remodeling: acts as a potent stimulator of osteoblastic bone formation, causing chemotaxis, proliferation and differentiation in committed osteoblasts. Can promote either T-helper 17 cells (Th17) or regulatory T-cells (Treg) lineage differentiation in a concentration-dependent manner. At high concentrations, leads to FOXP3-mediated suppression of RORC and down-regulation of IL-17 expression, favoring Treg cell development. At low concentrations in concert with IL-6 and IL-21, leads to expression of the IL-17 and IL-23 receptors, favoring differentiation to Th17 cells. Stimulates sustained production of collagen through the activation of CREB3L1 by regulated intramembrane proteolysis (RIP). Mediates SMAD2/3 activation by inducing its phosphorylation and subsequent translocation to the nucleus. Positively regulates odontoblastic differentiation in dental papilla cells, via promotion of IPO7-mediated translocation of phosphorylated SMAD2 to the nucleus and subsequent transcription of target genes. Can induce epithelial-to-mesenchymal transition (EMT) and cell migration in various cell types. The polypeptide is Transforming growth factor beta-1 proprotein (TGFB1) (Sus scrofa (Pig)).